A 333-amino-acid polypeptide reads, in one-letter code: MFSQKINYSHLFTFSITLYVEIVTGILGHGFIALVNIMDWVKRRRISSVDQILTALALTRFIYVLSMLICILLFMLCPHLPRRSEMLSAMGIFWVVNSHFSIWLTTCLGVFYFLKIANFSNSFFLYLKWRVKKVILIIILASLIFLTLHILSLGIYDQFSIAAYVGNMSYSLTDLTQFSSTFLFSNSSNVFLITNSSHVFLPINSLFMLIPFTVSLVAFLMLIFSLWKHHKKMQVNAKQPRDVSTMAHIKALQTVFSFLLLYAIYLLFLIIGILNLGLMEKIVILIFDHISGAVFPISHSFVLILGNSKLRQASLSVLPCLRCQSKDMDTMGL.

Residues 1–13 (MFSQKINYSHLFT) are Extracellular-facing. A glycan (N-linked (GlcNAc...) asparagine) is linked at Asn-7. Residues 14-34 (FSITLYVEIVTGILGHGFIAL) traverse the membrane as a helical segment. Residues 35–60 (VNIMDWVKRRRISSVDQILTALALTR) are Cytoplasmic-facing. The helical transmembrane segment at 61–81 (FIYVLSMLICILLFMLCPHLP) threads the bilayer. The Extracellular portion of the chain corresponds to 82 to 90 (RRSEMLSAM). Residues 91 to 111 (GIFWVVNSHFSIWLTTCLGVF) traverse the membrane as a helical segment. The Cytoplasmic portion of the chain corresponds to 112 to 134 (YFLKIANFSNSFFLYLKWRVKKV). A helical transmembrane segment spans residues 135–155 (ILIIILASLIFLTLHILSLGI). At 156–205 (YDQFSIAAYVGNMSYSLTDLTQFSSTFLFSNSSNVFLITNSSHVFLPINS) the chain is on the extracellular side. Asn-167, Asn-186, and Asn-195 each carry an N-linked (GlcNAc...) asparagine glycan. The helical transmembrane segment at 206–226 (LFMLIPFTVSLVAFLMLIFSL) threads the bilayer. The Cytoplasmic segment spans residues 227-253 (WKHHKKMQVNAKQPRDVSTMAHIKALQ). Residues 254–274 (TVFSFLLLYAIYLLFLIIGIL) form a helical membrane-spanning segment. Over 275 to 281 (NLGLMEK) the chain is Extracellular. Residues 282–302 (IVILIFDHISGAVFPISHSFV) traverse the membrane as a helical segment. The Cytoplasmic segment spans residues 303–333 (LILGNSKLRQASLSVLPCLRCQSKDMDTMGL).

It belongs to the G-protein coupled receptor T2R family. In terms of tissue distribution, expressed in subsets of taste receptor cells of the tongue and palate epithelium and exclusively in gustducin-positive cells. Expressed in the duodenum, antrum and fundus (part of the stomach).

The protein resides in the membrane. Gustducin-coupled receptor implicated in the perception of bitter compounds in the oral cavity and the gastrointestinal tract. Signals through PLCB2 and the calcium-regulated cation channel TRPM5. The chain is Taste receptor type 2 member 123 (Tas2r123) from Mus musculus (Mouse).